The primary structure comprises 232 residues: Uracil phosphoribosyltransferase (232 aa).

Residue 38-42 (KGLVK) participates in GTP binding. Residues R87, R112, and 140–148 (DPMIATGST) each bind 5-phospho-alpha-D-ribose 1-diphosphate. Uracil-binding positions include I204 and 209 to 211 (GDA). D210 lines the 5-phospho-alpha-D-ribose 1-diphosphate pocket.

It belongs to the UPRTase family. Requires Mg(2+) as cofactor.

The enzyme catalyses UMP + diphosphate = 5-phospho-alpha-D-ribose 1-diphosphate + uracil. The protein operates within pyrimidine metabolism; UMP biosynthesis via salvage pathway; UMP from uracil: step 1/1. Allosterically activated by GTP. Catalyzes the conversion of uracil and 5-phospho-alpha-D-ribose 1-diphosphate (PRPP) to UMP and diphosphate. This is Uracil phosphoribosyltransferase from Pyrococcus furiosus (strain ATCC 43587 / DSM 3638 / JCM 8422 / Vc1).